Here is a 488-residue protein sequence, read N- to C-terminus: Sucrose 6(F)-phosphate phosphorylase (488 aa).

Sucrose 6(F)-phosphate contacts are provided by residues Asp-49, His-87, 195-197 (RLD), Glu-238, 295-296 (HD), 342-345 (DVHQ), and Arg-399. The active-site Nucleophile is the Asp-197. Glu-238 functions as the Proton donor/acceptor in the catalytic mechanism.

Belongs to the glycosyl hydrolase 13 family. Sucrose phosphorylase subfamily. Monomer.

The catalysed reaction is sucrose 6(F)-phosphate + phosphate = beta-D-fructose 6-phosphate + alpha-D-glucose 1-phosphate. Functionally, catalyzes the reversible phosphorolysis of sucrose 6(F)-phosphate into alpha-D-glucose 1-phosphate (Glc1P) and D-fructose 6-phosphate. May be involved in a new pathway for the degradation of sucrose, which could become phosphorylated on its fructose moiety during uptake via a PTS system. To a lesser extent, can also reversibly act on sucrose in vitro. Is also able to catalyze transglycosylation reactions in vitro. The chain is Sucrose 6(F)-phosphate phosphorylase from Thermoanaerobacterium thermosaccharolyticum (strain ATCC 7956 / DSM 571 / NCIMB 9385 / NCA 3814 / NCTC 13789 / WDCM 00135 / 2032) (Clostridium thermosaccharolyticum).